The following is a 496-amino-acid chain: Glycine receptor subunit beta (496 aa).

An N-terminal signal peptide occupies residues 1–22 (MKFSLAVSFFILMSLLFEDACS). The Extracellular portion of the chain corresponds to 23–268 (KEKSSKKGKG…IFTLRRQVGF (246 aa)). The N-linked (GlcNAc...) asparagine glycan is linked to Asn54. Glycine contacts are provided by Arg108 and Ser174. A disulfide bridge links Cys183 with Cys197. Residue Asn242 is glycosylated (N-linked (GlcNAc...) asparagine). A disulfide bridge connects residues Cys243 and Cys255. Glycine is bound at residue Thr250. Residues 269–289 (YMMGVYAPTLLIVVLSWLSFW) form a helical membrane-spanning segment. Topologically, residues 290-294 (INPDA) are cytoplasmic. Residues 295–315 (SAARVPLGIFSVLSLASECTT) traverse the membrane as a helical segment. Residues 316–327 (LAAELPKVSYVK) lie on the Extracellular side of the membrane. A helical membrane pass occupies residues 328 to 349 (ALDVWLIACLLFGFASLVEYAV). Residues 350-471 (VQVMLNNPKR…KPVIPTAAKR (122 aa)) lie on the Cytoplasmic side of the membrane. Residue Thr391 is modified to Phosphothreonine. A helical membrane pass occupies residues 472 to 495 (IDLYARALFPFCFLFFNVIYWSIY). Leu496 is a topological domain (extracellular).

Belongs to the ligand-gated ion channel (TC 1.A.9) family. Glycine receptor (TC 1.A.9.3) subfamily. GLRB sub-subfamily. In terms of assembly, forms heteropentamers with glycin receptor alpha subunits. Heteropentamers with GLRA1 can be composed of two GLRA1 and three GLRB subunits, or three GLRA1 and two GLRB subunits, or four GLRA1 subunits and one GLRB subunit. Forms heteropentamers with GLRA2. Functional GLRB-GLRA2 heteropentamers contain four GLRA2 subunits and one GLRB subunit, although alternative subunit composition cannot be excluded. Forms a heteropentamer with GLRA3. Interacts with GPHN. Detected in spinal cord and brain stem (at protein level). Detected in spinal cord, cerebellum and brain cortex.

The protein localises to the postsynaptic cell membrane. Its subcellular location is the cell membrane. It localises to the synapse. It is found in the perikaryon. The protein resides in the cell projection. The protein localises to the dendrite. Its subcellular location is the cytoplasm. The catalysed reaction is chloride(in) = chloride(out). Its activity is regulated as follows. Channel opening is triggered by extracellular glycine. Heteropentameric channels composed of GLRB and GLRA1 are activated by lower glycine levels than homopentameric GLRA1. Its function is as follows. Subunit of heteromeric glycine-gated chloride channels. Plays an important role in the down-regulation of neuronal excitability. Contributes to the generation of inhibitory postsynaptic currents. The sequence is that of Glycine receptor subunit beta (Glrb) from Rattus norvegicus (Rat).